We begin with the raw amino-acid sequence, 397 residues long: Pyridinium-3,5-bisthiocarboxylic acid mononucleotide nickel insertion protein (397 aa).

It belongs to the LarC family.

The catalysed reaction is Ni(II)-pyridinium-3,5-bisthiocarboxylate mononucleotide = pyridinium-3,5-bisthiocarboxylate mononucleotide + Ni(2+). Its function is as follows. Involved in the biosynthesis of a nickel-pincer cofactor ((SCS)Ni(II) pincer complex). Binds Ni(2+), and functions in nickel delivery to pyridinium-3,5-bisthiocarboxylic acid mononucleotide (P2TMN), to form the mature cofactor. Is thus probably required for the activation of nickel-pincer cofactor-dependent enzymes. The protein is Pyridinium-3,5-bisthiocarboxylic acid mononucleotide nickel insertion protein of Thermotoga petrophila (strain ATCC BAA-488 / DSM 13995 / JCM 10881 / RKU-1).